A 474-amino-acid chain; its full sequence is Bifunctional protein HldE (474 aa).

Residues 1–318 form a ribokinase region; sequence MKLSMPRFDQ…RAIQREEGSE (318 aa). 194–197 lines the ATP pocket; the sequence is NLSE. Residue Asp263 is part of the active site. The interval 343–474 is cytidylyltransferase; the sequence is FTNGCFDILH…AIVEKIRGQG (132 aa).

In the N-terminal section; belongs to the carbohydrate kinase PfkB family. It in the C-terminal section; belongs to the cytidylyltransferase family. In terms of assembly, homodimer.

It catalyses the reaction D-glycero-beta-D-manno-heptose 7-phosphate + ATP = D-glycero-beta-D-manno-heptose 1,7-bisphosphate + ADP + H(+). The catalysed reaction is D-glycero-beta-D-manno-heptose 1-phosphate + ATP + H(+) = ADP-D-glycero-beta-D-manno-heptose + diphosphate. It functions in the pathway nucleotide-sugar biosynthesis; ADP-L-glycero-beta-D-manno-heptose biosynthesis; ADP-L-glycero-beta-D-manno-heptose from D-glycero-beta-D-manno-heptose 7-phosphate: step 1/4. It participates in nucleotide-sugar biosynthesis; ADP-L-glycero-beta-D-manno-heptose biosynthesis; ADP-L-glycero-beta-D-manno-heptose from D-glycero-beta-D-manno-heptose 7-phosphate: step 3/4. Functionally, catalyzes the phosphorylation of D-glycero-D-manno-heptose 7-phosphate at the C-1 position to selectively form D-glycero-beta-D-manno-heptose-1,7-bisphosphate. Its function is as follows. Catalyzes the ADP transfer from ATP to D-glycero-beta-D-manno-heptose 1-phosphate, yielding ADP-D-glycero-beta-D-manno-heptose. The polypeptide is Bifunctional protein HldE (Pseudomonas syringae pv. tomato (strain ATCC BAA-871 / DC3000)).